The chain runs to 230 residues: Large ribosomal subunit protein bL25 (230 aa).

Belongs to the bacterial ribosomal protein bL25 family. CTC subfamily. In terms of assembly, part of the 50S ribosomal subunit; part of the 5S rRNA/L5/L18/L25 subcomplex. Contacts the 5S rRNA. Binds to the 5S rRNA independently of L5 and L18.

In terms of biological role, this is one of the proteins that binds to the 5S RNA in the ribosome where it forms part of the central protuberance. The sequence is that of Large ribosomal subunit protein bL25 (rplY) from Rhodopseudomonas palustris (strain ATCC BAA-98 / CGA009).